Consider the following 100-residue polypeptide: NADH-quinone oxidoreductase subunit K (100 aa).

A run of 3 helical transmembrane segments spans residues 2-22 (ITLS…LIGI), 29-49 (IMLF…LAAI), and 63-83 (LFIV…LILW).

It belongs to the complex I subunit 4L family. As to quaternary structure, NDH-1 is composed of 14 different subunits. Subunits NuoA, H, J, K, L, M, N constitute the membrane sector of the complex.

It localises to the cell inner membrane. The catalysed reaction is a quinone + NADH + 5 H(+)(in) = a quinol + NAD(+) + 4 H(+)(out). In terms of biological role, NDH-1 shuttles electrons from NADH, via FMN and iron-sulfur (Fe-S) centers, to quinones in the respiratory chain. The immediate electron acceptor for the enzyme in this species is believed to be ubiquinone. Couples the redox reaction to proton translocation (for every two electrons transferred, four hydrogen ions are translocated across the cytoplasmic membrane), and thus conserves the redox energy in a proton gradient. This chain is NADH-quinone oxidoreductase subunit K, found in Campylobacter curvus (strain 525.92).